The chain runs to 335 residues: DNA-directed RNA polymerase subunit alpha (335 aa).

An alpha N-terminal domain (alpha-NTD) region spans residues 1-233 (MVREKIRVST…DLLIPFLHAE (233 aa)). The segment at 263-335 (KKKIALKFIF…HFVIDLKNKR (73 aa)) is alpha C-terminal domain (alpha-CTD).

It belongs to the RNA polymerase alpha chain family. In terms of assembly, in plastids the minimal PEP RNA polymerase catalytic core is composed of four subunits: alpha, beta, beta', and beta''. When a (nuclear-encoded) sigma factor is associated with the core the holoenzyme is formed, which can initiate transcription.

It is found in the plastid. The protein localises to the chloroplast. The catalysed reaction is RNA(n) + a ribonucleoside 5'-triphosphate = RNA(n+1) + diphosphate. DNA-dependent RNA polymerase catalyzes the transcription of DNA into RNA using the four ribonucleoside triphosphates as substrates. This is DNA-directed RNA polymerase subunit alpha from Spinacia oleracea (Spinach).